The chain runs to 147 residues: MDTLTAISRWLAKQHVVTWCVCHEGELWCANAFYLFDAQHVAFYVLTDDKTRHAQMSGACAPVAGTVNGQPKTVARIRGVQFKGEIRRLEGQESDVARKAYLRRFPVARVLPAPVWEIRLDEIKFTDNTLGFGKKMRWLRDSSAQQA.

This sequence belongs to the UPF0306 family.

This Salmonella arizonae (strain ATCC BAA-731 / CDC346-86 / RSK2980) protein is UPF0306 protein YhbP.